Reading from the N-terminus, the 306-residue chain is NADH-cytochrome b5 reductase 2-B (306 aa).

The helical transmembrane segment at 12 to 32 threads the bilayer; sequence PLLLSSGIAVTAAAAVYFSTG. In terms of domain architecture, FAD-binding FR-type spans 53–157; it reads STWVDLPLVK…TGPIVKYEWK (105 aa). 160–195 lines the FAD pocket; the sequence is KFDSVTLLGAGSGITPLYQLMGSILSNPEDKTKINL.

The protein belongs to the flavoprotein pyridine nucleotide cytochrome reductase family. FAD is required as a cofactor.

It localises to the mitochondrion outer membrane. The enzyme catalyses 2 Fe(III)-[cytochrome b5] + NADH = 2 Fe(II)-[cytochrome b5] + NAD(+) + H(+). Functionally, may mediate the reduction of outer membrane cytochrome b5. The polypeptide is NADH-cytochrome b5 reductase 2-B (MCR1B) (Vanderwaltozyma polyspora (strain ATCC 22028 / DSM 70294 / BCRC 21397 / CBS 2163 / NBRC 10782 / NRRL Y-8283 / UCD 57-17) (Kluyveromyces polysporus)).